The primary structure comprises 461 residues: Kynurenine 3-monooxygenase (461 aa).

2 helical membrane passes run 395-415 (GFMN…VTFT) and 432-452 (ILSN…AIGI).

This sequence belongs to the aromatic-ring hydroxylase family. KMO subfamily. FAD is required as a cofactor.

It is found in the mitochondrion. It localises to the membrane. It catalyses the reaction L-kynurenine + NADPH + O2 + H(+) = 3-hydroxy-L-kynurenine + NADP(+) + H2O. It participates in cofactor biosynthesis; NAD(+) biosynthesis; quinolinate from L-kynurenine: step 1/3. Functionally, catalyzes the hydroxylation of L-kynurenine (L-Kyn) to form 3-hydroxy-L-kynurenine (L-3OHKyn). Required for synthesis of quinolinic acid. The chain is Kynurenine 3-monooxygenase from Caenorhabditis briggsae.